The chain runs to 553 residues: Hydroxylamine reductase (553 aa).

Residues cysteine 3, cysteine 6, cysteine 18, and cysteine 25 each contribute to the [2Fe-2S] cluster site. Residues histidine 252, glutamate 276, cysteine 320, cysteine 408, cysteine 436, cysteine 461, glutamate 495, and lysine 497 each coordinate hybrid [4Fe-2O-2S] cluster. Cysteine 408 bears the Cysteine persulfide mark.

Belongs to the HCP family. Requires [2Fe-2S] cluster as cofactor. Hybrid [4Fe-2O-2S] cluster is required as a cofactor.

The protein resides in the cytoplasm. It carries out the reaction A + NH4(+) + H2O = hydroxylamine + AH2 + H(+). Catalyzes the reduction of hydroxylamine to form NH(3) and H(2)O. The polypeptide is Hydroxylamine reductase (Vibrio parahaemolyticus serotype O3:K6 (strain RIMD 2210633)).